A 31-amino-acid polypeptide reads, in one-letter code: Photosystem I reaction center subunit XII (31 aa).

The helical transmembrane segment at 7–26 (QVYIALLTALIPAFFALKLG) threads the bilayer.

It belongs to the PsaM family.

The protein resides in the plastid. The protein localises to the chloroplast thylakoid membrane. The sequence is that of Photosystem I reaction center subunit XII from Euglena viridis (Cercaria viridis).